A 172-amino-acid polypeptide reads, in one-letter code: Small ribosomal subunit protein uS13 (172 aa).

The tract at residues 131-172 is disordered; it reads GQRTRTTGRTGVTVGVRRSKAAQAAQQQQKAQASSGGEKKQG. Residues 134–163 show a composition bias toward low complexity; sequence TRTTGRTGVTVGVRRSKAAQAAQQQQKAQA.

Belongs to the universal ribosomal protein uS13 family. As to quaternary structure, part of the 30S ribosomal subunit. Forms a loose heterodimer with protein S19. Forms two bridges to the 50S subunit in the 70S ribosome.

Functionally, located at the top of the head of the 30S subunit, it contacts several helices of the 16S rRNA. In the 70S ribosome it contacts the 23S rRNA (bridge B1a) and protein L5 of the 50S subunit (bridge B1b), connecting the 2 subunits; these bridges are implicated in subunit movement. The polypeptide is Small ribosomal subunit protein uS13 (Sulfurisphaera tokodaii (strain DSM 16993 / JCM 10545 / NBRC 100140 / 7) (Sulfolobus tokodaii)).